Reading from the N-terminus, the 156-residue chain is 6,7-dimethyl-8-ribityllumazine synthase (156 aa).

5-amino-6-(D-ribitylamino)uracil is bound by residues Phe22, 57 to 59 (AYE), and 81 to 83 (TVI). 86-87 (GT) serves as a coordination point for (2S)-2-hydroxy-3-oxobutyl phosphate. The Proton donor role is filled by His89. Phe114 is a 5-amino-6-(D-ribitylamino)uracil binding site. (2S)-2-hydroxy-3-oxobutyl phosphate is bound at residue Arg128.

It belongs to the DMRL synthase family. Forms an icosahedral capsid composed of 60 subunits, arranged as a dodecamer of pentamers.

The catalysed reaction is (2S)-2-hydroxy-3-oxobutyl phosphate + 5-amino-6-(D-ribitylamino)uracil = 6,7-dimethyl-8-(1-D-ribityl)lumazine + phosphate + 2 H2O + H(+). It functions in the pathway cofactor biosynthesis; riboflavin biosynthesis; riboflavin from 2-hydroxy-3-oxobutyl phosphate and 5-amino-6-(D-ribitylamino)uracil: step 1/2. Functionally, catalyzes the formation of 6,7-dimethyl-8-ribityllumazine by condensation of 5-amino-6-(D-ribitylamino)uracil with 3,4-dihydroxy-2-butanone 4-phosphate. This is the penultimate step in the biosynthesis of riboflavin. The sequence is that of 6,7-dimethyl-8-ribityllumazine synthase from Yersinia enterocolitica serotype O:8 / biotype 1B (strain NCTC 13174 / 8081).